The primary structure comprises 409 residues: LL-diaminopimelate aminotransferase (409 aa).

Y15 and G42 together coordinate substrate. Residues Y72, 108–109 (AK), Y132, N186, Y217, and 245–247 (SFS) each bind pyridoxal 5'-phosphate. Residues K109, Y132, and N186 each contribute to the substrate site. An N6-(pyridoxal phosphate)lysine modification is found at K248. Residues R256 and N291 each contribute to the pyridoxal 5'-phosphate site. Residues N291 and R385 each coordinate substrate.

It belongs to the class-I pyridoxal-phosphate-dependent aminotransferase family. LL-diaminopimelate aminotransferase subfamily. In terms of assembly, homodimer. Requires pyridoxal 5'-phosphate as cofactor.

It catalyses the reaction (2S,6S)-2,6-diaminopimelate + 2-oxoglutarate = (S)-2,3,4,5-tetrahydrodipicolinate + L-glutamate + H2O + H(+). The protein operates within amino-acid biosynthesis; L-lysine biosynthesis via DAP pathway; LL-2,6-diaminopimelate from (S)-tetrahydrodipicolinate (aminotransferase route): step 1/1. In terms of biological role, involved in the synthesis of meso-diaminopimelate (m-DAP or DL-DAP), required for both lysine and peptidoglycan biosynthesis. Catalyzes the direct conversion of tetrahydrodipicolinate to LL-diaminopimelate. This is LL-diaminopimelate aminotransferase from Desulfosudis oleivorans (strain DSM 6200 / JCM 39069 / Hxd3) (Desulfococcus oleovorans).